The sequence spans 142 residues: Taurine up-regulated 1 protein (142 aa).

A signal peptide spans 1–40 (MARPPPLPGLVGRRSGRAVDRAIGWRLFLLLWHPALGAQA). Residues 41–123 (RPPRRAPGGR…ARTQLEGQEG (83 aa)) lie on the Extracellular side of the membrane. The chain crosses the membrane as a helical span at residues 124 to 140 (AGGWLVVGFLLCLFLLM). Topologically, residues 141–142 (PP) are cytoplasmic.

As to expression, widely expressed in the adult with highest levels in placenta and testis. Also expressed in a number of embryonic tissues at multiple embryonic stages.

It localises to the nucleus membrane. It is found in the mitochondrion membrane. The protein localises to the cytoplasm. The chain is Taurine up-regulated 1 protein from Mus musculus (Mouse).